The sequence spans 1089 residues: Pentatricopeptide repeat-containing protein MRL1, chloroplastic (1089 aa).

The N-terminal 72 residues, 1-72 (MEVTSTTFIS…SIRSPRLVVR (72 aa)), are a transit peptide targeting the chloroplast. PPR repeat units lie at residues 466–500 (TMST…GMTA), 501–535 (DCKL…GVEA), 536–570 (NLHT…NVKP), 571–605 (DRVV…THPI), 608–642 (DHIS…GIRG), 643–677 (TPEV…DVTP), 678–712 (DEVF…GIRL), 713–747 (GTIS…KLRP), 748–782 (TIST…GLKP), and 783–817 (NTIT…GVSP).

This sequence belongs to the PPR family. P subfamily. Expressed in stems, leaves and sepals.

The protein localises to the plastid. It is found in the chloroplast. Regulator of the large subunit (LS) of RuBisCO. Involved either in the processing or in the stabilization of the processed transcript, probably by acting as a barrier to the 5'&gt;3' degradation. The chain is Pentatricopeptide repeat-containing protein MRL1, chloroplastic (MRL1) from Arabidopsis thaliana (Mouse-ear cress).